The primary structure comprises 84 residues: Large ribosomal subunit protein bL27 (84 aa).

The segment at Met1–Leu21 is disordered.

The protein belongs to the bacterial ribosomal protein bL27 family.

This chain is Large ribosomal subunit protein bL27, found in Chlorobium luteolum (strain DSM 273 / BCRC 81028 / 2530) (Pelodictyon luteolum).